The following is a 709-amino-acid chain: Ribosomal RNA large subunit methyltransferase K/L (709 aa).

Residues 43–154 (LAYRITLWTR…NGVITIAMNF (112 aa)) enclose the THUMP domain.

It belongs to the methyltransferase superfamily. RlmKL family.

The protein resides in the cytoplasm. It carries out the reaction guanosine(2445) in 23S rRNA + S-adenosyl-L-methionine = N(2)-methylguanosine(2445) in 23S rRNA + S-adenosyl-L-homocysteine + H(+). It catalyses the reaction guanosine(2069) in 23S rRNA + S-adenosyl-L-methionine = N(2)-methylguanosine(2069) in 23S rRNA + S-adenosyl-L-homocysteine + H(+). Specifically methylates the guanine in position 2445 (m2G2445) and the guanine in position 2069 (m7G2069) of 23S rRNA. This chain is Ribosomal RNA large subunit methyltransferase K/L, found in Shewanella baltica (strain OS195).